Consider the following 784-residue polypeptide: ATP-dependent 6-phosphofructokinase, platelet type (784 aa).

Met1 carries the post-translational modification N-acetylmethionine. Residues 1-398 (MSDLDSSSSS…NLNTYKRLAI (398 aa)) are N-terminal catalytic PFK domain 1. Phosphoserine is present on residues Ser2, Ser6, and Ser20. ATP contacts are provided by residues Gly33, 96 to 97 (RC), and 126 to 129 (GDGS). Position 127 (Asp127) interacts with Mg(2+). Ser141 is modified (phosphoserine). Residues 172-174 (SID), Arg209, 216-218 (MGR), Glu272, Arg300, and 306-309 (HVQR) each bind substrate. The active-site Proton acceptor is Asp174. Lys394 carries the N6-acetyllysine modification. Positions 399-410 (KLPDEKIVKSNC) are interdomain linker. The C-terminal regulatory PFK domain 2 stretch occupies residues 411-784 (NVAVINVGAP…LESLQHHEEL (374 aa)). Arg480 provides a ligand contact to beta-D-fructose 2,6-bisphosphate. An N6-acetyllysine modification is found at Lys485. Residues 537-541 (TVSNN), Arg575, 582-584 (MGG), and Glu638 each bind beta-D-fructose 2,6-bisphosphate. The O-linked (GlcNAc) serine glycan is linked to Ser539. Tyr650 bears the Phosphotyrosine mark. Residues Arg664 and 670 to 673 (HMQQ) each bind beta-D-fructose 2,6-bisphosphate. N6-acetyllysine is present on Lys687. Arg743 provides a ligand contact to beta-D-fructose 2,6-bisphosphate.

This sequence belongs to the phosphofructokinase type A (PFKA) family. ATP-dependent PFK group I subfamily. Eukaryotic two domain clade 'E' sub-subfamily. In terms of assembly, homo- and heterotetramers. Phosphofructokinase (PFK) enzyme functions as a tetramer composed of different combinations of 3 types of subunits, called PFKM (M), PFKL (L) and PFKP (P). The composition of the PFK tetramer differs according to the tissue type it is present in. The kinetic and regulatory properties of the tetrameric enzyme are dependent on the subunit composition, hence can vary across tissues. Interacts with ATG4B; promoting phosphorylation of ATG4B. Mg(2+) serves as cofactor. GlcNAcylation decreases enzyme activity. As to expression, expression is constant during tumor growth and markedly decreases when cell proliferation stops.

It localises to the cytoplasm. The enzyme catalyses beta-D-fructose 6-phosphate + ATP = beta-D-fructose 1,6-bisphosphate + ADP + H(+). It functions in the pathway carbohydrate degradation; glycolysis; D-glyceraldehyde 3-phosphate and glycerone phosphate from D-glucose: step 3/4. Its activity is regulated as follows. Allosterically activated by ADP, AMP, or fructose 2,6-bisphosphate, and allosterically inhibited by ATP or citrate. Its function is as follows. Catalyzes the phosphorylation of D-fructose 6-phosphate to fructose 1,6-bisphosphate by ATP, the first committing step of glycolysis. The sequence is that of ATP-dependent 6-phosphofructokinase, platelet type (Pfkp) from Mus musculus (Mouse).